The following is a 269-amino-acid chain: 4-hydroxy-tetrahydrodipicolinate reductase (269 aa).

NAD(+)-binding positions include 8 to 13, Glu34, 98 to 100, and 122 to 125; these read GAAGRM, GTT, and APNY. The active-site Proton donor/acceptor is His155. Position 156 (His156) interacts with (S)-2,3,4,5-tetrahydrodipicolinate. Lys159 functions as the Proton donor in the catalytic mechanism. Residue 165-166 participates in (S)-2,3,4,5-tetrahydrodipicolinate binding; sequence GT.

This sequence belongs to the DapB family.

The protein localises to the cytoplasm. It carries out the reaction (S)-2,3,4,5-tetrahydrodipicolinate + NAD(+) + H2O = (2S,4S)-4-hydroxy-2,3,4,5-tetrahydrodipicolinate + NADH + H(+). It catalyses the reaction (S)-2,3,4,5-tetrahydrodipicolinate + NADP(+) + H2O = (2S,4S)-4-hydroxy-2,3,4,5-tetrahydrodipicolinate + NADPH + H(+). It functions in the pathway amino-acid biosynthesis; L-lysine biosynthesis via DAP pathway; (S)-tetrahydrodipicolinate from L-aspartate: step 4/4. In terms of biological role, catalyzes the conversion of 4-hydroxy-tetrahydrodipicolinate (HTPA) to tetrahydrodipicolinate. This is 4-hydroxy-tetrahydrodipicolinate reductase from Aliivibrio salmonicida (strain LFI1238) (Vibrio salmonicida (strain LFI1238)).